We begin with the raw amino-acid sequence, 250 residues long: Ribosomal RNA small subunit methyltransferase J (250 aa).

S-adenosyl-L-methionine is bound by residues 101–102 (RD), 117–118 (ER), 153–154 (SS), and aspartate 171.

This sequence belongs to the methyltransferase superfamily. RsmJ family.

The protein resides in the cytoplasm. It catalyses the reaction guanosine(1516) in 16S rRNA + S-adenosyl-L-methionine = N(2)-methylguanosine(1516) in 16S rRNA + S-adenosyl-L-homocysteine + H(+). In terms of biological role, specifically methylates the guanosine in position 1516 of 16S rRNA. The sequence is that of Ribosomal RNA small subunit methyltransferase J from Escherichia fergusonii (strain ATCC 35469 / DSM 13698 / CCUG 18766 / IAM 14443 / JCM 21226 / LMG 7866 / NBRC 102419 / NCTC 12128 / CDC 0568-73).